Reading from the N-terminus, the 466-residue chain is 3-isopropylmalate dehydratase large subunit (466 aa).

Residues Cys347, Cys407, and Cys410 each coordinate [4Fe-4S] cluster.

It belongs to the aconitase/IPM isomerase family. LeuC type 1 subfamily. Heterodimer of LeuC and LeuD. [4Fe-4S] cluster serves as cofactor.

It carries out the reaction (2R,3S)-3-isopropylmalate = (2S)-2-isopropylmalate. Its pathway is amino-acid biosynthesis; L-leucine biosynthesis; L-leucine from 3-methyl-2-oxobutanoate: step 2/4. Catalyzes the isomerization between 2-isopropylmalate and 3-isopropylmalate, via the formation of 2-isopropylmaleate. This chain is 3-isopropylmalate dehydratase large subunit, found in Serratia proteamaculans (strain 568).